The chain runs to 406 residues: MSNNPEMNYTSKELDAMSNEELARLGTELDGVTVAYRKERFPVEGDPASKRASRTVGIWFGIGIVSALAFLAVYLFMPWEYKGLGEDGLWIYTFYTPLLGLTSGLAILSLGIGVIFYIKKIIPSEISVQRRHDGPSEEIDRRTITALLNDSWETSTLGRRKVLKSMLGIGGVLAGLTIIAPLGGMVKNPWKKGELGIQGDGTLWTSGWTLHEKGVKLYLGRDTGVTAEKHETSVGTHYSTQGVSRLIRMRPEDLAAAAMETVFPLPAEFVNDGDKYDASADVYEEQMHSIHGPRNAVMLIRLRNSDANKVIEREGQEDFHYGDYYAYSKICTHIGCPTSLYEAQTNRILCPCHQSQFDALHYGKPVFGPAARALPQLPITVDEEGYLVAAGNFIEPVGPAFWERRS.

A run of 3 helical transmembrane segments spans residues 56-76 (VGIWFGIGIVSALAFLAVYLF), 98-118 (LLGLTSGLAILSLGIGVIFYI), and 166-186 (MLGIGGVLAGLTIIAPLGGMV). A Rieske domain is found at 291-388 (HGPRNAVMLI…ITVDEEGYLV (98 aa)). [2Fe-2S] cluster is bound by residues cysteine 331, histidine 333, cysteine 350, and histidine 353. A disulfide bond links cysteine 336 and cysteine 352.

Belongs to the Rieske iron-sulfur protein family. The cytochrome bc1 complex is composed of a cytochrome b (QcrB), the Rieske iron-sulfur protein (QcrA) and a diheme cytochrome c (QcrC) subunit. The bc1 complex forms a supercomplex with cytochrome c oxidase (cytochrome aa3). [2Fe-2S] cluster serves as cofactor.

It is found in the cell membrane. Functionally, iron-sulfur subunit of the cytochrome bc1 complex, an essential component of the respiratory electron transport chain required for ATP synthesis. The bc1 complex catalyzes the oxidation of menaquinol and the reduction of cytochrome c in the respiratory chain. The bc1 complex operates through a Q-cycle mechanism that couples electron transfer to generation of the proton gradient that drives ATP synthesis. The polypeptide is Cytochrome bc1 complex Rieske iron-sulfur subunit (qcrA) (Corynebacterium diphtheriae (strain ATCC 700971 / NCTC 13129 / Biotype gravis)).